A 411-amino-acid chain; its full sequence is Flavohemoprotein (411 aa).

Positions 5–142 (TLSQETKQIV…IADVFIQVEK (138 aa)) constitute a Globin domain. His-89 provides a ligand contact to heme b. Residues Tyr-99 and Glu-141 each act as charge relay system in the active site. Residues 153–411 (GGWREFRSFV…FGPAGTLASS (259 aa)) form a reductase region. In terms of domain architecture, FAD-binding FR-type spans 156 to 267 (REFRSFVVEK…TAPAGDFTLQ (112 aa)). Residues Tyr-194 and 210–213 (RQYS) contribute to the FAD site. Position 280–285 (280–285 (GVGITP)) interacts with NADP(+). 401–404 (FFGP) contacts FAD.

It belongs to the globin family. Two-domain flavohemoproteins subfamily. In the C-terminal section; belongs to the flavoprotein pyridine nucleotide cytochrome reductase family. The cofactor is heme b. FAD is required as a cofactor.

The enzyme catalyses 2 nitric oxide + NADPH + 2 O2 = 2 nitrate + NADP(+) + H(+). It catalyses the reaction 2 nitric oxide + NADH + 2 O2 = 2 nitrate + NAD(+) + H(+). Its function is as follows. Is involved in NO detoxification in an aerobic process, termed nitric oxide dioxygenase (NOD) reaction that utilizes O(2) and NAD(P)H to convert NO to nitrate, which protects the bacterium from various noxious nitrogen compounds. Therefore, plays a central role in the inducible response to nitrosative stress. This chain is Flavohemoprotein, found in Halalkalibacterium halodurans (strain ATCC BAA-125 / DSM 18197 / FERM 7344 / JCM 9153 / C-125) (Bacillus halodurans).